The primary structure comprises 112 residues: METLLKVLSGTLLWQLTWVRSQQPVQSPQAVILREGEDAVINCSSSKALYSVHWYRQKHGEAPVFLMILLKGGEQKGHDKISASFNEKKQQSSLYLTASQLSYSGTYFCGTE.

The first 21 residues, 1-21, serve as a signal peptide directing secretion; that stretch reads METLLKVLSGTLLWQLTWVRS. The 89-residue stretch at 24-112 folds into the Ig-like domain; the sequence is PVQSPQAVIL…YSGTYFCGTE (89 aa). Asn-42 carries an N-linked (GlcNAc...) asparagine glycan. A disulfide bridge links Cys-43 with Cys-109.

Alpha-beta TR is a heterodimer composed of an alpha and beta chain; disulfide-linked. The alpha-beta TR is associated with the transmembrane signaling CD3 coreceptor proteins to form the TR-CD3 (TcR or TCR). The assembly of alpha-beta TR heterodimers with CD3 occurs in the endoplasmic reticulum where a single alpha-beta TR heterodimer associates with one CD3D-CD3E heterodimer, one CD3G-CD3E heterodimer and one CD247 homodimer forming a stable octameric structure. CD3D-CD3E and CD3G-CD3E heterodimers preferentially associate with TR alpha and TR beta chains, respectively. The association of the CD247 homodimer is the last step of TcR assembly in the endoplasmic reticulum and is required for transport to the cell surface.

The protein localises to the cell membrane. V region of the variable domain of T cell receptor (TR) alpha chain that participates in the antigen recognition. Alpha-beta T cell receptors are antigen specific receptors which are essential to the immune response and are present on the cell surface of T lymphocytes. Recognize peptide-major histocompatibility (MH) (pMH) complexes that are displayed by antigen presenting cells (APC), a prerequisite for efficient T cell adaptive immunity against pathogens. Binding of alpha-beta TR to pMH complex initiates TR-CD3 clustering on the cell surface and intracellular activation of LCK that phosphorylates the ITAM motifs of CD3G, CD3D, CD3E and CD247 enabling the recruitment of ZAP70. In turn ZAP70 phosphorylates LAT, which recruits numerous signaling molecules to form the LAT signalosome. The LAT signalosome propagates signal branching to three major signaling pathways, the calcium, the mitogen-activated protein kinase (MAPK) kinase and the nuclear factor NF-kappa-B (NF-kB) pathways, leading to the mobilization of transcription factors that are critical for gene expression and essential for T cell growth and differentiation. The T cell repertoire is generated in the thymus, by V-(D)-J rearrangement. This repertoire is then shaped by intrathymic selection events to generate a peripheral T cell pool of self-MH restricted, non-autoaggressive T cells. Post-thymic interaction of alpha-beta TR with the pMH complexes shapes TR structural and functional avidity. This Homo sapiens (Human) protein is T cell receptor alpha variable 30.